We begin with the raw amino-acid sequence, 589 residues long: Phenylalanine--tRNA ligase beta subunit (589 aa).

A B5 domain is found at 302–379 (LAYRKEMVRA…IAYGYNNIQM (78 aa)). Mg(2+)-binding residues include Asp-357, Asp-363, Glu-366, and Asp-367.

This sequence belongs to the phenylalanyl-tRNA synthetase beta subunit family. Type 2 subfamily. In terms of assembly, heterotetramer; dimer of two heterodimers formed by FARSA and FARSB. It depends on Mg(2+) as a cofactor.

The protein localises to the cytoplasm. The enzyme catalyses tRNA(Phe) + L-phenylalanine + ATP = L-phenylalanyl-tRNA(Phe) + AMP + diphosphate + H(+). This is Phenylalanine--tRNA ligase beta subunit (FARSB) from Homo sapiens (Human).